Consider the following 254-residue polypeptide: Large ribosomal subunit protein uL2 (254 aa).

Belongs to the universal ribosomal protein uL2 family. In terms of assembly, component of the large ribosomal subunit. Mature ribosomes consist of a small (40S) and a large (60S) subunit. The 40S subunit contains about 32 different proteins and 1 molecule of RNA (18S). The 60S subunit contains 45 different proteins and 3 molecules of RNA (25S, 5.8S and 5S).

The protein resides in the cytoplasm. In terms of biological role, component of the ribosome, a large ribonucleoprotein complex responsible for the synthesis of proteins in the cell. The small ribosomal subunit (SSU) binds messenger RNAs (mRNAs) and translates the encoded message by selecting cognate aminoacyl-transfer RNA (tRNA) molecules. The large subunit (LSU) contains the ribosomal catalytic site termed the peptidyl transferase center (PTC), which catalyzes the formation of peptide bonds, thereby polymerizing the amino acids delivered by tRNAs into a polypeptide chain. The nascent polypeptides leave the ribosome through a tunnel in the LSU and interact with protein factors that function in enzymatic processing, targeting, and the membrane insertion of nascent chains at the exit of the ribosomal tunnel. The chain is Large ribosomal subunit protein uL2 from Candida albicans (strain SC5314 / ATCC MYA-2876) (Yeast).